Reading from the N-terminus, the 675-residue chain is MSELDLEENNPLLPPSQINDENYEGSIFGEDARFCPNSRQVFRICSNLKLLIDKIIPICFKEDEITSSNSAILSDPVIDLVYQAAGGKGDGKEGTSSYKYRGSLVFCLLKVCDWYWQQAEFELSDNELYSLRALTAQTIAAIIIEREKRDKYLFLNMLCHRYTICVNGVDATPVSALEMAVDMHSTIVIGSSGYQRCIKWLWRGWIIQSSTDPHSYVLYKGAASQSFRTHFDPARIKTPLYQNILEIFLSIIYLIIFTIVVNTHSTLTGDIDFFETVLYLFTVGYILDEFIKFYHVGWNYLGFWNAFNDTMYCILTVAVCFRIASVNSHGATRIKYDEISFRVLACASPLMWSRLLLFLDAYKFVGAMIVVLKTMMKESILFFFLLFVVIVGFLQGFIGLDSSDGKNEATQRILISLVKAVIGGSSFEDMGNLVPPYASVLYYFYQFMLTVILMNILIALYSTAYAAIVENATDEYFALVAHKTLRYIRAPDQNLYVPPFNLIELLITPIGWFVSTSTWKNINYYVMLVIYSPLLAYITSDELSNARRIQYNRFKGVPDDANEIDTEWDLTDGYDEDSPGDGDDCWDRIRERNSEITEELRIQREGERQDPEFMINTHQFSEKIDKIVKPVGQASKVGVNWQIYEVIEKIDKLTNLLEVVVAENKELKKRLENKA.

8 consecutive transmembrane segments (helical) span residues 244–264 (ILEI…VNTH), 271–291 (IDFF…DEFI), 301–321 (LGFW…AVCF), 355–375 (LLLF…LKTM), 380–400 (ILFF…FIGL), 440–460 (VLYY…LIAL), 495–515 (LYVP…WFVS), and 518–538 (TWKN…LAYI). A coiled-coil region spans residues 644–675 (YEVIEKIDKLTNLLEVVVAENKELKKRLENKA).

Belongs to the transient receptor (TC 1.A.4) family.

The protein localises to the vacuole membrane. Functionally, vacuolar calcium channel involved in the release of calcium ions from the vacuole in response to hyperosmotic or alkaline stress. Required for activation of CAP1-related transcription of oxidative stress response (OSR) genes, but also for maintaining the stability of both the mitochondria and the vacuole in a potassium- and calcium-dependent manner. Contributes to pathogenicity. Plays a key role in hyphal polarized growth and re-orientation to host-signals through its contribution to the localization of the Spitzenkoerper to the hyphal tips. In Candida albicans (strain SC5314 / ATCC MYA-2876) (Yeast), this protein is Calcium channel YVC1 (YVC1).